The following is a 1816-amino-acid chain: Laminin subunit alpha-4 (1816 aa).

Residues 1 to 24 form the signal peptide; sequence MGWSTAWCSVLALWLLWCAVCSNA. O-linked (Xyl...) (chondroitin sulfate) serine glycosylation is present at serine 39. Intrachain disulfides connect cysteine 82–cysteine 91, cysteine 84–cysteine 98, cysteine 101–cysteine 110, cysteine 113–cysteine 129, cysteine 132–cysteine 146, cysteine 134–cysteine 155, cysteine 157–cysteine 166, cysteine 169–cysteine 184, cysteine 187–cysteine 202, cysteine 189–cysteine 209, cysteine 212–cysteine 221, and cysteine 224–cysteine 238. Laminin EGF-like domains lie at 82 to 131, 132 to 186, and 187 to 240; these read CDCN…FCQP, CPCP…TCKK, and CDCS…NCAV. N-linked (GlcNAc...) asparagine glycosylation is present at asparagine 104. Residue asparagine 215 is glycosylated (N-linked (GlcNAc...) asparagine). Residues 241-255 enclose the Laminin EGF-like 4; truncated domain; that stretch reads CNCGGGPCDSVTGEC. The domain II and I stretch occupies residues 256–825; the sequence is LEEGFEVPTG…AQTRSVASKI (570 aa). Asparagine 308, asparagine 333, asparagine 458, asparagine 550, asparagine 571, asparagine 574, asparagine 631, and asparagine 639 each carry an N-linked (GlcNAc...) asparagine glycan. Residues 431 to 523 are a coiled coil; it reads THRELVDEEA…ERVKEQMEVV (93 aa). Positions 556–604 form a coiled coil; that stretch reads AEIDGAKNELQGKLSNLSNLSHDLVQEATDHAYNLQQEADELSRNLHSS. A coiled-coil region spans residues 655-717; that stretch reads IIYHKDESDN…AVKQLQAAER (63 aa). The short motif at 717 to 719 is the Cell attachment site element; sequence RGD. N-linked (GlcNAc...) asparagine glycans are attached at residues asparagine 735, asparagine 751, asparagine 754, asparagine 780, and asparagine 803. A coiled-coil region spans residues 770-799; that stretch reads AVDSARDAVRNLTEVVPQLLDQLRTVEQKR. Laminin G-like domains are found at residues 826–1030, 1042–1222, and 1229–1397; these read QVSM…SVPC, AASY…GYGC, and SRRA…LYEC. A disulfide bridge connects residues cysteine 1000 and cysteine 1030. A glycan (N-linked (GlcNAc...) asparagine) is linked at asparagine 1088. Cysteines 1196 and 1222 form a disulfide. N-linked (GlcNAc...) asparagine glycosylation is found at asparagine 1283 and asparagine 1361. An intrachain disulfide couples cysteine 1365 to cysteine 1397. Residues 1409-1419 are compositionally biased toward basic residues; the sequence is KKGKNSSKPKT. The segment at 1409-1433 is disordered; the sequence is KKGKNSSKPKTNKQGEKSKDAPSWD. Residues 1421–1430 are compositionally biased toward basic and acidic residues; sequence KQGEKSKDAP. Laminin G-like domains follow at residues 1462–1633 and 1640–1813; these read AYQY…VTPC and TGTY…INSC. Intrachain disulfides connect cysteine 1610–cysteine 1633 and cysteine 1785–cysteine 1813.

As to quaternary structure, laminin is a complex glycoprotein, consisting of three different polypeptide chains (alpha, beta, gamma), which are bound to each other by disulfide bonds into a cross-shaped molecule comprising one long and three short arms with globules at each end. Alpha-4 is a subunit of laminin-8 (laminin-411), laminin-9 (laminin-421) and laminin-14 (laminin-423). Strongly expressed in peripheral nerves, cardiac muscle, fat, dermis, lung stroma, aortic endothelium, endocardium and endothelium of blood vessels in skin and brain.

The protein localises to the secreted. The protein resides in the extracellular space. It is found in the extracellular matrix. It localises to the basement membrane. Its function is as follows. Binding to cells via a high affinity receptor, laminin is thought to mediate the attachment, migration and organization of cells into tissues during embryonic development by interacting with other extracellular matrix components. This chain is Laminin subunit alpha-4 (Lama4), found in Mus musculus (Mouse).